We begin with the raw amino-acid sequence, 147 residues long: Small ribosomal subunit protein uS5 (147 aa).

Residues 9-72 form the S5 DRBM domain; it reads FEEVIVDIGR…DDAFKNIIHV (64 aa).

The protein belongs to the universal ribosomal protein uS5 family. In terms of assembly, part of the 30S ribosomal subunit. Contacts proteins S4 and S8.

Functionally, with S4 and S12 plays an important role in translational accuracy. Its function is as follows. Located at the back of the 30S subunit body where it stabilizes the conformation of the head with respect to the body. This is Small ribosomal subunit protein uS5 from Campylobacter concisus (strain 13826).